The chain runs to 423 residues: Gamma-glutamyl phosphate reductase (423 aa).

Belongs to the gamma-glutamyl phosphate reductase family.

The protein resides in the cytoplasm. It catalyses the reaction L-glutamate 5-semialdehyde + phosphate + NADP(+) = L-glutamyl 5-phosphate + NADPH + H(+). It functions in the pathway amino-acid biosynthesis; L-proline biosynthesis; L-glutamate 5-semialdehyde from L-glutamate: step 2/2. Functionally, catalyzes the NADPH-dependent reduction of L-glutamate 5-phosphate into L-glutamate 5-semialdehyde and phosphate. The product spontaneously undergoes cyclization to form 1-pyrroline-5-carboxylate. In Burkholderia lata (strain ATCC 17760 / DSM 23089 / LMG 22485 / NCIMB 9086 / R18194 / 383), this protein is Gamma-glutamyl phosphate reductase.